Here is a 122-residue protein sequence, read N- to C-terminus: Acidic phospholipase A2 (122 aa).

7 disulfide bridges follow: C26–C115, C28–C44, C43–C95, C49–C122, C50–C88, C57–C81, and C75–C86. Positions 27, 29, and 31 each coordinate Ca(2+). H47 is a catalytic residue. D48 contributes to the Ca(2+) binding site. D89 is an active-site residue.

Ca(2+) is required as a cofactor. Expressed by the venom gland.

It localises to the secreted. It carries out the reaction a 1,2-diacyl-sn-glycero-3-phosphocholine + H2O = a 1-acyl-sn-glycero-3-phosphocholine + a fatty acid + H(+). Functionally, PLA2 catalyzes the calcium-dependent hydrolysis of the 2-acyl groups in 3-sn-phosphoglycerides. This is Acidic phospholipase A2 from Lachesis stenophrys (Central American bushmaster).